The primary structure comprises 86 residues: ATP synthase subunit c (86 aa).

2 helical membrane-spanning segments follow: residues 13–33 and 63–83; these read FFAT…AGLA and ILGQ…AFIL.

This sequence belongs to the ATPase C chain family. In terms of assembly, F-type ATPases have 2 components, F(1) - the catalytic core - and F(0) - the membrane proton channel. F(1) has five subunits: alpha(3), beta(3), gamma(1), delta(1), epsilon(1). F(0) has three main subunits: a(1), b(2) and c(10-14). The alpha and beta chains form an alternating ring which encloses part of the gamma chain. F(1) is attached to F(0) by a central stalk formed by the gamma and epsilon chains, while a peripheral stalk is formed by the delta and b chains.

It is found in the cell membrane. Its function is as follows. F(1)F(0) ATP synthase produces ATP from ADP in the presence of a proton or sodium gradient. F-type ATPases consist of two structural domains, F(1) containing the extramembraneous catalytic core and F(0) containing the membrane proton channel, linked together by a central stalk and a peripheral stalk. During catalysis, ATP synthesis in the catalytic domain of F(1) is coupled via a rotary mechanism of the central stalk subunits to proton translocation. Functionally, key component of the F(0) channel; it plays a direct role in translocation across the membrane. A homomeric c-ring of between 10-14 subunits forms the central stalk rotor element with the F(1) delta and epsilon subunits. The protein is ATP synthase subunit c of Acholeplasma laidlawii (strain PG-8A).